We begin with the raw amino-acid sequence, 138 residues long: MDSKKELIFKKENIGLGKRKQSIARVFLLPGDGKIIINKTSGNKYLQYNDNYLNTVWSPLEKLNLEKQFDIVALVQGGGLTGQAQAIQLGVARLLCTMDKENRSILKPFGFLTRDSRIKERKKYGLRKARKAPQYSKR.

It belongs to the universal ribosomal protein uS9 family.

The protein localises to the plastid. It localises to the chloroplast. In Phaeodactylum tricornutum (strain CCAP 1055/1), this protein is Small ribosomal subunit protein uS9c (rps9).